The primary structure comprises 424 residues: Serine--tRNA ligase (424 aa).

The segment at 109–129 (QEDVPYGESEEDNREERKWGD) is disordered. L-serine is bound at residue 231–233 (TAE). Residue 262 to 264 (RSE) coordinates ATP. Residue glutamate 285 participates in L-serine binding. 349 to 352 (EISS) provides a ligand contact to ATP. An L-serine-binding site is contributed by serine 385.

Belongs to the class-II aminoacyl-tRNA synthetase family. Type-1 seryl-tRNA synthetase subfamily. In terms of assembly, homodimer. The tRNA molecule binds across the dimer.

The protein resides in the cytoplasm. The catalysed reaction is tRNA(Ser) + L-serine + ATP = L-seryl-tRNA(Ser) + AMP + diphosphate + H(+). It carries out the reaction tRNA(Sec) + L-serine + ATP = L-seryl-tRNA(Sec) + AMP + diphosphate + H(+). The protein operates within aminoacyl-tRNA biosynthesis; selenocysteinyl-tRNA(Sec) biosynthesis; L-seryl-tRNA(Sec) from L-serine and tRNA(Sec): step 1/1. Functionally, catalyzes the attachment of serine to tRNA(Ser). Is also able to aminoacylate tRNA(Sec) with serine, to form the misacylated tRNA L-seryl-tRNA(Sec), which will be further converted into selenocysteinyl-tRNA(Sec). The chain is Serine--tRNA ligase from Shouchella clausii (strain KSM-K16) (Alkalihalobacillus clausii).